The following is a 143-amino-acid chain: D-aminoacyl-tRNA deacylase (143 aa).

A Gly-cisPro motif, important for rejection of L-amino acids motif is present at residues 135 to 136 (GP).

The protein belongs to the DTD family. Homodimer.

The protein resides in the cytoplasm. The catalysed reaction is glycyl-tRNA(Ala) + H2O = tRNA(Ala) + glycine + H(+). It catalyses the reaction a D-aminoacyl-tRNA + H2O = a tRNA + a D-alpha-amino acid + H(+). Its function is as follows. An aminoacyl-tRNA editing enzyme that deacylates mischarged D-aminoacyl-tRNAs. Also deacylates mischarged glycyl-tRNA(Ala), protecting cells against glycine mischarging by AlaRS. Acts via tRNA-based rather than protein-based catalysis; rejects L-amino acids rather than detecting D-amino acids in the active site. By recycling D-aminoacyl-tRNA to D-amino acids and free tRNA molecules, this enzyme counteracts the toxicity associated with the formation of D-aminoacyl-tRNA entities in vivo and helps enforce protein L-homochirality. The sequence is that of D-aminoacyl-tRNA deacylase from Nocardia farcinica (strain IFM 10152).